We begin with the raw amino-acid sequence, 286 residues long: Aquaporin NIP1-3 (286 aa).

The interval 1-44 (MAGGEHGVNGQHEETRAMEEGSRDHQARCENSEQDGGSKSSSNN) is disordered. The span at 11-31 (QHEETRAMEEGSRDHQARCEN) shows a compositional bias: basic and acidic residues. The segment covering 34–44 (QDGGSKSSSNN) has biased composition (polar residues). Helical transmembrane passes span 56-76 (VIAE…AVAV) and 84-104 (VTFP…VYSV). Residues 113 to 115 (NPA) carry the NPA 1 motif. The next 3 membrane-spanning stretches (helical) occupy residues 131 to 153 (VPAY…RALF), 172 to 192 (SLAM…GVAT), and 200 to 220 (LAGL…GPIS). The NPA 2 motif lies at 225 to 227 (NPA). The chain crosses the membrane as a helical span at residues 239–259 (YTGIWVYIAGPVFGAVAGAWA).

Belongs to the MIP/aquaporin (TC 1.A.8) family. NIP (TC 1.A.8.12) subfamily.

The protein resides in the membrane. Aquaporins facilitate the transport of water and small neutral solutes across cell membranes. In Oryza sativa subsp. japonica (Rice), this protein is Aquaporin NIP1-3 (NIP1-3).